The primary structure comprises 130 residues: Succinate dehydrogenase assembly factor 3, mitochondrial (130 aa).

The transit peptide at 1 to 8 directs the protein to the mitochondrion; the sequence is MRPSLLRL.

Belongs to the complex I LYR family. SDHAF3 subfamily. As to quaternary structure, interacts with the iron-sulfur protein subunit within the SDH catalytic dimer.

Its subcellular location is the mitochondrion matrix. Functionally, plays an essential role in the assembly of succinate dehydrogenase (SDH), an enzyme complex (also referred to as respiratory complex II) that is a component of both the tricarboxylic acid (TCA) cycle and the mitochondrial electron transport chain, and which couples the oxidation of succinate to fumarate with the reduction of ubiquinone (coenzyme Q) to ubiquinol. Promotes maturation of the iron-sulfur protein subunit of the SDH catalytic dimer, protecting it from the deleterious effects of oxidants. May act together with SDHAF1. In Gibberella zeae (strain ATCC MYA-4620 / CBS 123657 / FGSC 9075 / NRRL 31084 / PH-1) (Wheat head blight fungus), this protein is Succinate dehydrogenase assembly factor 3, mitochondrial.